A 339-amino-acid chain; its full sequence is Immunoglobulin-binding protein 1 (339 aa).

Ala-2 carries the N-acetylalanine modification. The UIM domain maps to 46–60 (LDLLEKAAEMLSQLD). Residues 98 to 202 (RLDHLQRARE…YLLHLQRWID (105 aa)) are interaction with PPP2CA. Disordered regions lie at residues 221–243 (RDSSREASTSNSSRQERPPVKPF) and 289–339 (APEE…QNMG). Residues 225–290 (REASTSNSSR…PDQGIAKAAP (66 aa)) are interaction with MID1. Lys-241 carries the N6-acetyllysine modification. Over residues 301 to 312 (EEQEEKEEEDDE) the composition is skewed to acidic residues. The segment covering 313-329 (QTLHRAREWDDWKDTHP) has biased composition (basic and acidic residues).

The protein belongs to the IGBP1/TAP42 family. Interacts with partially folded PPP2CA, but not with the fully active protein. Interacts with PPP2CB, and with PP4 and PP6. Interacts with MID1 and MID2. Interacts with ubiquitin. Phosphorylated. In terms of processing, monoubiquitination by MID1 triggers calpain-mediated cleavage and switches IGBP1 activity from protective to destructive. As to expression, ubiquitously expressed with highest levels in heart, skeletal muscle and pancreas.

Its subcellular location is the cytoplasm. In terms of biological role, associated to surface IgM-receptor; may be involved in signal transduction. Involved in regulation of the catalytic activity of the phosphatases PP2A, PP4 and PP6 by protecting their partially folded catalytic subunits from degradative polyubiquitination until they associate with regulatory subunits. This is Immunoglobulin-binding protein 1 (IGBP1) from Homo sapiens (Human).